Consider the following 113-residue polypeptide: Cysteine proteinase inhibitor 6 (113 aa).

The signal sequence occupies residues 1-18 (MAMTTRTLLLAAVCAAAA). A Secondary area of contact motif is present at residues 65–69 (QVVSG).

This sequence belongs to the cystatin family. Phytocystatin subfamily.

The protein localises to the secreted. In terms of biological role, specific inhibitor of cysteine proteinases. Probably involved in the regulation of endogenous processes and in defense against pests and pathogens. The polypeptide is Cysteine proteinase inhibitor 6 (Oryza sativa subsp. japonica (Rice)).